A 241-amino-acid chain; its full sequence is ATP synthase subunit a (241 aa).

5 helical membrane-spanning segments follow: residues 21–41 (LASI…AIAC), 84–104 (VTLI…AIVI), 116–136 (DATV…YYGI), 183–203 (ILIG…WIIG), and 207–227 (LIAW…IFIM).

Belongs to the ATPase A chain family. In terms of assembly, F-type ATPases have 2 components, CF(1) - the catalytic core - and CF(0) - the membrane proton channel. CF(1) has five subunits: alpha(3), beta(3), gamma(1), delta(1), epsilon(1). CF(0) has three main subunits: a(1), b(2) and c(9-12). The alpha and beta chains form an alternating ring which encloses part of the gamma chain. CF(1) is attached to CF(0) by a central stalk formed by the gamma and epsilon chains, while a peripheral stalk is formed by the delta and b chains.

The protein localises to the cell membrane. Functionally, key component of the proton channel; it plays a direct role in the translocation of protons across the membrane. The protein is ATP synthase subunit a of Staphylococcus carnosus (strain TM300).